The chain runs to 155 residues: MAVKKIVQIGHEALKKVSEPVKDVNEVKGLIQDLKDTLATVEGIGLAAPQIAVNKRVVYINFGDGENEYVLINPEVTGVSKETYEDYEGCLSYVMHEGLVERPRAVRIQALNEKGELKVYEAQDLLARCFLHEIDHLEGIMYVDRAKEMYELVEK.

Residues cysteine 90 and histidine 132 each contribute to the Fe cation site. Glutamate 133 is a catalytic residue. Histidine 136 serves as a coordination point for Fe cation.

It belongs to the polypeptide deformylase family. It depends on Fe(2+) as a cofactor.

It carries out the reaction N-terminal N-formyl-L-methionyl-[peptide] + H2O = N-terminal L-methionyl-[peptide] + formate. Functionally, removes the formyl group from the N-terminal Met of newly synthesized proteins. Requires at least a dipeptide for an efficient rate of reaction. N-terminal L-methionine is a prerequisite for activity but the enzyme has broad specificity at other positions. This is Peptide deformylase 2 from Clostridium perfringens (strain 13 / Type A).